A 72-amino-acid polypeptide reads, in one-letter code: Galensin (72 aa).

The N-terminal stretch at 1-22 (MLTLKKSMLLLFFLGLVSVSLA) is a signal peptide. The propeptide occupies 23 to 48 (DDKREDEAEEGEDKRAAEEERNVEKR). The residue at position 71 (Phe-71) is a Phenylalanine amide.

It belongs to the frog skin active peptide (FSAP) family. Brevinin subfamily. In terms of assembly, homodimer; disulfide-linked. In terms of tissue distribution, expressed by the skin glands.

It localises to the secreted. In terms of biological role, antibacterial activity against the Gram-positive bacterium M.luteus and the Gram-negative bacterium E.coli. In Kassina senegalensis (Senegal running frog), this protein is Galensin.